The primary structure comprises 232 residues: (S)-2-haloacid dehalogenase (232 aa).

Residue Asp10 is the Nucleophile of the active site. An (S)-2-haloacid is bound by residues 11–12 (LY), Arg41, and 118–119 (SN). Positions 175-180 (SSNAWD) are important for catalytic activity.

Belongs to the HAD-like hydrolase superfamily. S-2-haloalkanoic acid dehalogenase family. As to quaternary structure, homodimer.

It catalyses the reaction an (S)-2-haloacid + H2O = a (2R)-2-hydroxycarboxylate + a halide anion + H(+). The catalysed reaction is (S)-2-chloropropanoate + H2O = (R)-lactate + chloride + H(+). Its function is as follows. Catalyzes the hydrolytic dehalogenation of small (S)-2-haloalkanoic acids to yield the corresponding (R)-2-hydroxyalkanoic acids. Acts on acids of short chain lengths, C(2) to C(4), with inversion of configuration at C-2. Active with 2-halogenated carboxylic acids and converts only the S-isomer (or L-isomer) of 2-chloropropionic acid with inversion of configuration to produce R-lactate (or D-isomer). In Pseudomonas sp. (strain YL), this protein is (S)-2-haloacid dehalogenase.